The sequence spans 321 residues: Cytochrome f (321 aa).

An N-terminal signal peptide occupies residues 1–38; the sequence is MINLFLLKYKTAFSTFLKPFAYLSLILSVCFYSIQAQA. Residues Phe39, Cys59, Cys62, and His63 each contribute to the heme site. The chain crosses the membrane as a helical span at residues 287–306; that stretch reads VKGLIAFFFTVILAQILLVL.

It belongs to the cytochrome f family. The 4 large subunits of the cytochrome b6-f complex are cytochrome b6, subunit IV (17 kDa polypeptide, petD), cytochrome f and the Rieske protein, while the 4 small subunits are PetG, PetL, PetM and PetN. The complex functions as a dimer. The cofactor is heme.

It localises to the plastid. Its subcellular location is the chloroplast thylakoid membrane. In terms of biological role, component of the cytochrome b6-f complex, which mediates electron transfer between photosystem II (PSII) and photosystem I (PSI), cyclic electron flow around PSI, and state transitions. This is Cytochrome f (petA) from Guillardia theta (Cryptophyte).